The sequence spans 237 residues: Ribitol-5-phosphate cytidylyltransferase (237 aa).

CTP is bound by residues 7 to 10, 81 to 87, and S112; these read LAGG and GSDRNES.

This sequence belongs to the IspD/TarI cytidylyltransferase family. TarI subfamily.

The enzyme catalyses D-ribitol 5-phosphate + CTP + H(+) = CDP-L-ribitol + diphosphate. It functions in the pathway cell wall biogenesis; poly(ribitol phosphate) teichoic acid biosynthesis. Functionally, catalyzes the transfer of the cytidylyl group of CTP to D-ribitol 5-phosphate. The protein is Ribitol-5-phosphate cytidylyltransferase of Bacillus spizizenii (strain ATCC 23059 / NRRL B-14472 / W23) (Bacillus subtilis subsp. spizizenii).